The following is a 312-amino-acid chain: Ribosomal RNA small subunit methyltransferase H (312 aa).

Residues 33 to 35 (GGH), D53, F80, D101, and Q108 each bind S-adenosyl-L-methionine.

The protein belongs to the methyltransferase superfamily. RsmH family.

It localises to the cytoplasm. It catalyses the reaction cytidine(1402) in 16S rRNA + S-adenosyl-L-methionine = N(4)-methylcytidine(1402) in 16S rRNA + S-adenosyl-L-homocysteine + H(+). Specifically methylates the N4 position of cytidine in position 1402 (C1402) of 16S rRNA. The polypeptide is Ribosomal RNA small subunit methyltransferase H (Desulfosudis oleivorans (strain DSM 6200 / JCM 39069 / Hxd3) (Desulfococcus oleovorans)).